The sequence spans 167 residues: NAD(P)H-quinone oxidoreductase subunit I, chloroplastic (167 aa).

2 4Fe-4S ferredoxin-type domains span residues 55 to 84 and 95 to 124; these read GRIH…VDWK and LNYS…MTEE. The [4Fe-4S] cluster site is built by C64, C67, C70, C74, C104, C107, C110, and C114.

This sequence belongs to the complex I 23 kDa subunit family. As to quaternary structure, NDH is composed of at least 16 different subunits, 5 of which are encoded in the nucleus. Requires [4Fe-4S] cluster as cofactor.

It localises to the plastid. Its subcellular location is the chloroplast thylakoid membrane. It catalyses the reaction a plastoquinone + NADH + (n+1) H(+)(in) = a plastoquinol + NAD(+) + n H(+)(out). It carries out the reaction a plastoquinone + NADPH + (n+1) H(+)(in) = a plastoquinol + NADP(+) + n H(+)(out). NDH shuttles electrons from NAD(P)H:plastoquinone, via FMN and iron-sulfur (Fe-S) centers, to quinones in the photosynthetic chain and possibly in a chloroplast respiratory chain. The immediate electron acceptor for the enzyme in this species is believed to be plastoquinone. Couples the redox reaction to proton translocation, and thus conserves the redox energy in a proton gradient. The sequence is that of NAD(P)H-quinone oxidoreductase subunit I, chloroplastic from Draba nemorosa (Woodland whitlowgrass).